Reading from the N-terminus, the 286-residue chain is Bifunctional protein FolD 2 (286 aa).

NADP(+) is bound by residues 165-167, Thr192, and Ile233; that span reads GRG.

Belongs to the tetrahydrofolate dehydrogenase/cyclohydrolase family. In terms of assembly, homodimer.

The enzyme catalyses (6R)-5,10-methylene-5,6,7,8-tetrahydrofolate + NADP(+) = (6R)-5,10-methenyltetrahydrofolate + NADPH. It carries out the reaction (6R)-5,10-methenyltetrahydrofolate + H2O = (6R)-10-formyltetrahydrofolate + H(+). Its pathway is one-carbon metabolism; tetrahydrofolate interconversion. In terms of biological role, catalyzes the oxidation of 5,10-methylenetetrahydrofolate to 5,10-methenyltetrahydrofolate and then the hydrolysis of 5,10-methenyltetrahydrofolate to 10-formyltetrahydrofolate. In Salinispora arenicola (strain CNS-205), this protein is Bifunctional protein FolD 2.